The following is a 142-amino-acid chain: Neurofilament heavy polypeptide (142 aa).

Residues 1 to 142 (MRGAVLRLGA…EAAKVNTDAM (142 aa)) enclose the IF rod domain. Residues 26 to 74 (IAHVRQRLDDEARQRQEAEAAARALARFAQEAEAARVELQKKAQALQEE) adopt a coiled-coil conformation.

This sequence belongs to the intermediate filament family. As to quaternary structure, forms heterodimers with NEFL; which can further hetero-oligomerize (in vitro). Forms heterodimers with INA (in vitro). There are a number of repeats of the tripeptide K-S-P, NFH is phosphorylated on a number of the serines in this motif. It is thought that phosphorylation of NFH results in the formation of interfilament cross bridges that are important in the maintenance of axonal caliber. In terms of processing, phosphorylation seems to play a major role in the functioning of the larger neurofilament polypeptides (NF-M and NF-H), the levels of phosphorylation being altered developmentally and coincidentally with a change in the neurofilament function. Post-translationally, phosphorylated in the head and rod regions by the PKC kinase PKN1, leading to the inhibition of polymerization.

Its subcellular location is the cytoplasm. It is found in the cytoskeleton. The protein localises to the cell projection. It localises to the axon. Neurofilaments usually contain three intermediate filament proteins: NEFL, NEFM, and NEFH which are involved in the maintenance of neuronal caliber. NEFH has an important function in mature axons that is not subserved by the two smaller NF proteins. May additionally cooperate with the neuronal intermediate filament proteins PRPH and INA to form neuronal filamentous networks. The chain is Neurofilament heavy polypeptide (NEFH) from Sus scrofa (Pig).